The sequence spans 235 residues: Purine nucleoside phosphorylase DeoD-type (235 aa).

His4 contributes to the a purine D-ribonucleoside binding site. Phosphate-binding positions include Gly20, Arg24, Arg43, and 87-90; that span reads RVGT. A purine D-ribonucleoside is bound by residues Glu162, 179–181, and 203–204; these read EME and SD. The Proton donor role is filled by Asp204.

It belongs to the PNP/UDP phosphorylase family. In terms of assembly, homohexamer; trimer of homodimers.

It carries out the reaction a purine D-ribonucleoside + phosphate = a purine nucleobase + alpha-D-ribose 1-phosphate. It catalyses the reaction a purine 2'-deoxy-D-ribonucleoside + phosphate = a purine nucleobase + 2-deoxy-alpha-D-ribose 1-phosphate. Catalyzes the reversible phosphorolytic breakdown of the N-glycosidic bond in the beta-(deoxy)ribonucleoside molecules, with the formation of the corresponding free purine bases and pentose-1-phosphate. The sequence is that of Purine nucleoside phosphorylase DeoD-type from Bacillus cereus (strain ZK / E33L).